Consider the following 144-residue polypeptide: Large ribosomal subunit protein uL13 (144 aa).

It belongs to the universal ribosomal protein uL13 family. In terms of assembly, part of the 50S ribosomal subunit.

Its function is as follows. This protein is one of the early assembly proteins of the 50S ribosomal subunit, although it is not seen to bind rRNA by itself. It is important during the early stages of 50S assembly. In Mycoplasmopsis pulmonis (strain UAB CTIP) (Mycoplasma pulmonis), this protein is Large ribosomal subunit protein uL13.